The following is a 317-amino-acid chain: Tenomodulin (317 aa).

The Cytoplasmic segment spans residues 1–30 (MAKNPPENCEGCHILNAEALKSKKIRKSLK). The chain crosses the membrane as a helical; Signal-anchor for type II membrane protein span at residues 31–50 (ICGLVFGILALTLIVLFWGS). Over 51–317 (KHFWPEVSKK…WWVARMLGRV (267 aa)) the chain is Extracellular. In terms of domain architecture, BRICHOS spans 93-186 (GNGTDETLEV…ICDNVTMYWI (94 aa)). Asparagine 94 carries N-linked (GlcNAc...) asparagine glycosylation. Cysteines 120 and 178 form a disulfide. Asparagine 180 carries an N-linked (GlcNAc...) asparagine glycan. Residue serine 239 is modified to Phosphoserine.

It belongs to the chondromodulin-1 family. Highly expressed in tendons.

It is found in the membrane. It localises to the nucleus envelope. Its function is as follows. May be an angiogenesis inhibitor. This Rattus norvegicus (Rat) protein is Tenomodulin (Tnmd).